A 700-amino-acid chain; its full sequence is MNPIVKSFEYGQHTVTLETGVIARQADAAVLASMGDTTVLVTVVGKKAEEPGRDFFPLTVNYQEKTYAAGKIPGGFFKREGRPSEGETLTARLIDRPIRPLFPNGFKNEVQVIITVVSVDPEISPEVISMIGTSAALSISGIPFNGPLGSARVGYVDGEYILNPTVSQLENSQLELSVAGTENAVLMVESEADALPEEVMLGAVVYGHEQQQVVIQAIKELKAEVNKPMWDWTAPVQNEELVAKVKDLAEAGLTEAYQIVVKQDRYAQVDVVKTAAKEALLAENPDADAREIDGLLGSLEKKVVRSRIIAGNPRIDGREPDMVRALSVMAGVLPRTHGSALFTRGETQALVTCTLGTERDAQKIDSIMGEQTSRFMLHYNFPPYSVGETGMVGSPKRREIGHGKLAWRGIHAVMPTAEEFPYSIRVVSEITESNGSSSMASVCGTSLALMDAGVPIKTSVAGIAMGLVKEGDDFVVLSDILGDEDHLGDMDFKVAGTRDGVTALQMDIKIEGITKEIMQIALQQAYGARVHILNVMDQAISGHRAEISDHAPRITTLKINPEKIRDVIGKGGATIRALTEETGTTIELEDDGTVKIASANGDATKEAIRRIQEITAEVEVGTVYNGKVVRIVDFGAFVTILPGKDGLVHISQIAEERVANVSDYLEVGQEVKVKVMEVDRQGRVRLSMKEAQPKEEAASE.

Residues D485 and D491 each contribute to the Mg(2+) site. The region spanning 552–611 (PRITTLKINPEKIRDVIGKGGATIRALTEETGTTIELEDDGTVKIASANGDATKEAIRRI) is the KH domain. One can recognise an S1 motif domain in the interval 621 to 689 (GTVYNGKVVR…RQGRVRLSMK (69 aa)).

This sequence belongs to the polyribonucleotide nucleotidyltransferase family. In terms of assembly, component of the RNA degradosome, which is a multiprotein complex involved in RNA processing and mRNA degradation. Mg(2+) is required as a cofactor.

The protein resides in the cytoplasm. It carries out the reaction RNA(n+1) + phosphate = RNA(n) + a ribonucleoside 5'-diphosphate. Its function is as follows. Involved in mRNA degradation. Catalyzes the phosphorolysis of single-stranded polyribonucleotides processively in the 3'- to 5'-direction. In Shewanella loihica (strain ATCC BAA-1088 / PV-4), this protein is Polyribonucleotide nucleotidyltransferase.